The chain runs to 284 residues: uncharacterized protein (284 aa).

A disordered region spans residues 236–284; it reads IDITNEADSSEIIDSEPSNKDETEKPSAQETDPFDGKPVDIKDDELPFD. Basic and acidic residues-rich tracts occupy residues 252–262 and 269–284; these read PSNKDETEKPS and FDGK…LPFD.

This is an uncharacterized protein from Bacillus subtilis (strain 168).